The primary structure comprises 696 residues: Elongation factor G (696 aa).

The tr-type G domain occupies 8–286; sequence EDVRNIGIAA…AVVAYLPAPT (279 aa). GTP-binding positions include 17–24, 81–85, and 135–138; these read AHIDAGKT, DTPGH, and NKMD.

This sequence belongs to the TRAFAC class translation factor GTPase superfamily. Classic translation factor GTPase family. EF-G/EF-2 subfamily.

The protein localises to the cytoplasm. Its function is as follows. Catalyzes the GTP-dependent ribosomal translocation step during translation elongation. During this step, the ribosome changes from the pre-translocational (PRE) to the post-translocational (POST) state as the newly formed A-site-bound peptidyl-tRNA and P-site-bound deacylated tRNA move to the P and E sites, respectively. Catalyzes the coordinated movement of the two tRNA molecules, the mRNA and conformational changes in the ribosome. This Sulfurimonas denitrificans (strain ATCC 33889 / DSM 1251) (Thiomicrospira denitrificans (strain ATCC 33889 / DSM 1251)) protein is Elongation factor G.